The primary structure comprises 412 residues: MGICLSAQIKAVSPGASPKYMSSEANDSLGSKSSSVSIRTNPRTEGEILQSPNLKSFTFAELKAATRNFRPDSVLGEGGFGSVFKGWIDEQTLTASKPGTGVVIAVKKLNQDGWQGHQEWLAEVNYLGQFSHPNLVKLIGYCLEDEHRLLVYEFMPRGSLENHLFRRGSYFQPLSWTLRLKVALGAAKGLAFLHNAETSVIYRDFKTSNILLDSEYNAKLSDFGLAKDGPTGDKSHVSTRIMGTYGYAAPEYLATGHLTTKSDVYSYGVVLLEVLSGRRAVDKNRPPGEQKLVEWARPLLANKRKLFRVIDNRLQDQYSMEEACKVATLALRCLTFEIKLRPNMNEVVSHLEHIQTLNEAGGRNIDMVQRRMRRRSDSVAINQKPNAGFARQTAVGVIATAYPRPSDSPLFV.

Gly-2 carries the N-myristoyl glycine lipid modification. Cys-4 carries S-palmitoyl cysteine lipidation. The disordered stretch occupies residues 15-45 (GASPKYMSSEANDSLGSKSSSVSIRTNPRTE). Polar residues predominate over residues 23–43 (SEANDSLGSKSSSVSIRTNPR). At Thr-58 the chain carries Phosphothreonine. The 288-residue stretch at 69–356 (FRPDSVLGEG…VVSHLEHIQT (288 aa)) folds into the Protein kinase domain. Residues 75–83 (LGEGGFGSV) and Lys-107 each bind ATP. A Phosphotyrosine modification is found at Tyr-152. The active-site Proton acceptor is Asp-204. 2 positions are modified to phosphoserine: Ser-208 and Ser-238. Phosphothreonine occurs at positions 239 and 244. Position 252 is a phosphotyrosine (Tyr-252).

It belongs to the protein kinase superfamily. Ser/Thr protein kinase family. As to quaternary structure, interacts with the Xanthomonas campestris effector XopAC/AvrAC. Expressed in stomatal guard cells of leaves.

It localises to the cell membrane. It catalyses the reaction L-seryl-[protein] + ATP = O-phospho-L-seryl-[protein] + ADP + H(+). The enzyme catalyses L-threonyl-[protein] + ATP = O-phospho-L-threonyl-[protein] + ADP + H(+). Possible bi-functional kinase. In vitro, it exhibits serine/threonine activity. In vivo, can phosphorylate tyrosine residues of limited substrates. May be involved in plant defense signaling. Required for full light-induced stomatal opening. This is Probable serine/threonine-protein kinase PBL10 from Arabidopsis thaliana (Mouse-ear cress).